The following is a 201-amino-acid chain: Large ribosomal subunit protein uL4 (201 aa).

Positions 46–71 are disordered; it reads QKTRAEVVGSGKKPWRQKGTGRARAG.

This sequence belongs to the universal ribosomal protein uL4 family. In terms of assembly, part of the 50S ribosomal subunit.

In terms of biological role, one of the primary rRNA binding proteins, this protein initially binds near the 5'-end of the 23S rRNA. It is important during the early stages of 50S assembly. It makes multiple contacts with different domains of the 23S rRNA in the assembled 50S subunit and ribosome. Functionally, forms part of the polypeptide exit tunnel. This is Large ribosomal subunit protein uL4 from Shewanella woodyi (strain ATCC 51908 / MS32).